The chain runs to 369 residues: Glutamate 5-kinase (369 aa).

Lys8 contributes to the ATP binding site. Residues Ser49, Asp136, and Asn148 each contribute to the substrate site. ATP contacts are provided by residues 168-169 (TD) and 212-218 (TGGMMTK). The 79-residue stretch at 277-355 (TGKLYLDSGA…KEISTILGYV (79 aa)) folds into the PUA domain.

It belongs to the glutamate 5-kinase family.

Its subcellular location is the cytoplasm. The catalysed reaction is L-glutamate + ATP = L-glutamyl 5-phosphate + ADP. Its pathway is amino-acid biosynthesis; L-proline biosynthesis; L-glutamate 5-semialdehyde from L-glutamate: step 1/2. Functionally, catalyzes the transfer of a phosphate group to glutamate to form L-glutamate 5-phosphate. In Trichormus variabilis (strain ATCC 29413 / PCC 7937) (Anabaena variabilis), this protein is Glutamate 5-kinase.